Consider the following 360-residue polypeptide: Peptide chain release factor 1 (360 aa).

Gln-235 is subject to N5-methylglutamine. Residues Gln-284–Thr-293 are compositionally biased toward basic and acidic residues. The disordered stretch occupies residues Gln-284–Asp-305.

The protein belongs to the prokaryotic/mitochondrial release factor family. In terms of processing, methylated by PrmC. Methylation increases the termination efficiency of RF1.

It localises to the cytoplasm. Peptide chain release factor 1 directs the termination of translation in response to the peptide chain termination codons UAG and UAA. The chain is Peptide chain release factor 1 from Pectobacterium carotovorum subsp. carotovorum (strain PC1).